A 400-amino-acid polypeptide reads, in one-letter code: Probable S-adenosylmethionine synthase (400 aa).

Lys135–Asp140 serves as a coordination point for ATP.

This sequence belongs to the AdoMet synthase 2 family. Requires Mg(2+) as cofactor.

It catalyses the reaction L-methionine + ATP + H2O = S-adenosyl-L-methionine + phosphate + diphosphate. Its pathway is amino-acid biosynthesis; S-adenosyl-L-methionine biosynthesis; S-adenosyl-L-methionine from L-methionine: step 1/1. Its function is as follows. Catalyzes the formation of S-adenosylmethionine from methionine and ATP. This chain is Probable S-adenosylmethionine synthase (mat), found in Aquifex aeolicus (strain VF5).